A 130-amino-acid chain; its full sequence is Small ribosomal subunit protein uS9 (130 aa).

The protein belongs to the universal ribosomal protein uS9 family.

This Nitrosomonas eutropha (strain DSM 101675 / C91 / Nm57) protein is Small ribosomal subunit protein uS9.